The primary structure comprises 304 residues: Protease HtpX homolog (304 aa).

A run of 2 helical transmembrane segments spans residues 14-34 and 39-59; these read IFII…IGII and YLNG…IMVM. Histidine 144 is a Zn(2+) binding site. Glutamate 145 is an active-site residue. Histidine 148 is a Zn(2+) binding site. Transmembrane regions (helical) follow at residues 159-179 and 202-222; these read IAIA…RMIF and AIIY…ATAI. Zn(2+) is bound at residue glutamate 231.

It belongs to the peptidase M48B family. Zn(2+) serves as cofactor.

The protein resides in the cell membrane. In Listeria monocytogenes serotype 4b (strain CLIP80459), this protein is Protease HtpX homolog.